We begin with the raw amino-acid sequence, 704 residues long: Elongation factor G (704 aa).

The tr-type G domain maps to 10–290 (KKVRNIGIMA…AVVDYLPSPL (281 aa)). GTP contacts are provided by residues 19–26 (AHIDAGKT), 83–87 (DTPGH), and 137–140 (NKMD).

It belongs to the TRAFAC class translation factor GTPase superfamily. Classic translation factor GTPase family. EF-G/EF-2 subfamily.

The protein localises to the cytoplasm. Its function is as follows. Catalyzes the GTP-dependent ribosomal translocation step during translation elongation. During this step, the ribosome changes from the pre-translocational (PRE) to the post-translocational (POST) state as the newly formed A-site-bound peptidyl-tRNA and P-site-bound deacylated tRNA move to the P and E sites, respectively. Catalyzes the coordinated movement of the two tRNA molecules, the mRNA and conformational changes in the ribosome. In Kocuria rhizophila (strain ATCC 9341 / DSM 348 / NBRC 103217 / DC2201), this protein is Elongation factor G.